Consider the following 657-residue polypeptide: Probable serine/threonine-protein kinase CA_C1728 (657 aa).

In terms of domain architecture, Protein kinase spans 10-274 (YKIEEEIGVG…ELSNVKNNYV (265 aa)). Residues 16–24 (IGVGGTAVV) and lysine 39 contribute to the ATP site. Aspartate 143 acts as the Proton acceptor in catalysis. Positions 286–334 (PAQIQNESNPNNKLDNDDTYYNGEPYNKEQPQEEPQEENEEPKNKIKGN) are disordered. A compositionally biased stretch (polar residues) spans 288-298 (QIQNESNPNNK). PASTA domains lie at 375–441 (SVSK…DISS), 443–509 (DTDQ…VISR), and 512–577 (EVKK…VIGR). Residues 581–657 (TAVQPPNNNN…TNTPNGTGQK (77 aa)) form a disordered region. 3 stretches are compositionally biased toward low complexity: residues 584-600 (QPPNNNNGNGNQNQNQN), 613-637 (PTGGNNDNQNQNNTTNPNGTQPAGG), and 645-657 (GNVTNTPNGTGQK).

The protein belongs to the protein kinase superfamily. Ser/Thr protein kinase family.

The catalysed reaction is L-seryl-[protein] + ATP = O-phospho-L-seryl-[protein] + ADP + H(+). The enzyme catalyses L-threonyl-[protein] + ATP = O-phospho-L-threonyl-[protein] + ADP + H(+). The sequence is that of Probable serine/threonine-protein kinase CA_C1728 from Clostridium acetobutylicum (strain ATCC 824 / DSM 792 / JCM 1419 / IAM 19013 / LMG 5710 / NBRC 13948 / NRRL B-527 / VKM B-1787 / 2291 / W).